We begin with the raw amino-acid sequence, 442 residues long: MPSLALPINKPSHHNVNYNGNSFNSIHATSFGMSPQSWGNSFSGQAWLRDTIPSLSNVVESQTIPEEDSTSYLNRLEEAFCRDFRCCGQTLEDLHQLIHHYEEQHAVLATDSAVPQEYSLDSNNAAQSNHSHIQALKQRERIRMHDLADQLGTSEISDNSAVLPFAFPANGGAPGPYRVSVVVPAAAAAAAAAASSDMSSDEASSQAETTGTPKKMPESLVMDASSPLSDMSMSIDVGESAANNVFAFNQKDMVDSTYLPPFNYDHDVFSFAPSVASADQFTESSMSPTPEVVSPAATNSAISSPFVRKSSSDLEAKPSKKQRSTPAFSHDSPLTIDYPGSNLVVVDKPYKCPVPNCDKAYKNQNGLKYHKLHGHCSPITTPTPAPIPHQGFVVENKPYRCEVCSKRYKNLNGLKYHRTHSHLQVSMAQAQREVQMNFMRTA.

A compositionally biased stretch (low complexity) spans 193–208 (AASSDMSSDEASSQAE). Disordered regions lie at residues 193–219 (AASSDMSSDEASSQAETTGTPKKMPES) and 304–333 (SPFVRKSSSDLEAKPSKKQRSTPAFSHDSP). C2H2-type zinc fingers lie at residues 350-375 (YKCPVPNCDKAYKNQNGLKYHKLHGH) and 399-422 (YRCEVCSKRYKNLNGLKYHRTHSH).

The protein localises to the cytoplasm. Its subcellular location is the nucleus. The chain is Zinc finger protein sfp1 (sfp1) from Schizosaccharomyces pombe (strain 972 / ATCC 24843) (Fission yeast).